Reading from the N-terminus, the 495-residue chain is Probable cytochrome P450 513C1 (495 aa).

Residues 1–21 (MNYLVLILVSLVSIYFLFIKN) traverse the membrane as a helical segment. Cys-441 is a binding site for heme.

It belongs to the cytochrome P450 family. Heme is required as a cofactor.

The protein resides in the membrane. This is Probable cytochrome P450 513C1 (cyp513C1) from Dictyostelium discoideum (Social amoeba).